The sequence spans 323 residues: Beta-ketoacyl-[acyl-carrier-protein] synthase III (323 aa).

Residues Cys114 and His250 contribute to the active site. The interval Gln251–Arg255 is ACP-binding. Asn280 is a catalytic residue.

This sequence belongs to the thiolase-like superfamily. FabH family. Homodimer.

It is found in the cytoplasm. It catalyses the reaction malonyl-[ACP] + acetyl-CoA + H(+) = 3-oxobutanoyl-[ACP] + CO2 + CoA. It functions in the pathway lipid metabolism; fatty acid biosynthesis. In terms of biological role, catalyzes the condensation reaction of fatty acid synthesis by the addition to an acyl acceptor of two carbons from malonyl-ACP. Catalyzes the first condensation reaction which initiates fatty acid synthesis and may therefore play a role in governing the total rate of fatty acid production. Possesses both acetoacetyl-ACP synthase and acetyl transacylase activities. Its substrate specificity determines the biosynthesis of branched-chain and/or straight-chain of fatty acids. In Alkalilimnicola ehrlichii (strain ATCC BAA-1101 / DSM 17681 / MLHE-1), this protein is Beta-ketoacyl-[acyl-carrier-protein] synthase III.